Here is a 285-residue protein sequence, read N- to C-terminus: Putative pyruvate, phosphate dikinase regulatory protein (285 aa).

165-172 (GVSRTSKT) contacts ADP.

This sequence belongs to the pyruvate, phosphate/water dikinase regulatory protein family. PDRP subfamily.

The enzyme catalyses N(tele)-phospho-L-histidyl/L-threonyl-[pyruvate, phosphate dikinase] + ADP = N(tele)-phospho-L-histidyl/O-phospho-L-threonyl-[pyruvate, phosphate dikinase] + AMP + H(+). The catalysed reaction is N(tele)-phospho-L-histidyl/O-phospho-L-threonyl-[pyruvate, phosphate dikinase] + phosphate + H(+) = N(tele)-phospho-L-histidyl/L-threonyl-[pyruvate, phosphate dikinase] + diphosphate. In terms of biological role, bifunctional serine/threonine kinase and phosphorylase involved in the regulation of the pyruvate, phosphate dikinase (PPDK) by catalyzing its phosphorylation/dephosphorylation. The polypeptide is Putative pyruvate, phosphate dikinase regulatory protein (Lactobacillus delbrueckii subsp. bulgaricus (strain ATCC BAA-365 / Lb-18)).